Reading from the N-terminus, the 167-residue chain is Menaquinol:cytochrome c reductase iron-sulfur subunit (167 aa).

Positions 59–158 (TKEPQRFDFK…QEVKDGFLYL (100 aa)) constitute a Rieske domain. The [2Fe-2S] cluster site is built by Cys-100, His-102, Cys-121, and His-124. Cys-105 and Cys-123 are oxidised to a cystine.

This sequence belongs to the Rieske iron-sulfur protein family. As to quaternary structure, the main subunits of the menaquinol:cytochrome c complex are a Rieske-type iron-sulfur protein (QcrA), a cytochrome b (QcrB) and a cytochrome c (QcrC). [2Fe-2S] cluster is required as a cofactor.

Functionally, component of the menaquinol:cytochrome c reductase complex. The Rieske protein is a high potential 2Fe-2S protein. The chain is Menaquinol:cytochrome c reductase iron-sulfur subunit (qcrA) from Bacillus subtilis (strain 168).